Consider the following 472-residue polypeptide: 3-isopropylmalate dehydratase large subunit (472 aa).

[4Fe-4S] cluster-binding residues include C353, C414, and C417.

Belongs to the aconitase/IPM isomerase family. LeuC type 1 subfamily. As to quaternary structure, heterodimer of LeuC and LeuD. [4Fe-4S] cluster serves as cofactor.

It carries out the reaction (2R,3S)-3-isopropylmalate = (2S)-2-isopropylmalate. It functions in the pathway amino-acid biosynthesis; L-leucine biosynthesis; L-leucine from 3-methyl-2-oxobutanoate: step 2/4. Functionally, catalyzes the isomerization between 2-isopropylmalate and 3-isopropylmalate, via the formation of 2-isopropylmaleate. This chain is 3-isopropylmalate dehydratase large subunit, found in Psychrobacter cryohalolentis (strain ATCC BAA-1226 / DSM 17306 / VKM B-2378 / K5).